The primary structure comprises 358 residues: Uptake hydrogenase small subunit (358 aa).

The signal sequence occupies residues 1–45 (MSDIETFYDVMRRQGITRRSFMKSVRSPQHVLGLGPSFVPKIGEA). [4Fe-4S] cluster contacts are provided by Cys-62, Cys-65, Cys-160, Cys-194, His-232, Cys-235, Cys-260, and Cys-266. Cys-275, Cys-294, and Cys-297 together coordinate [3Fe-4S] cluster.

The protein belongs to the [NiFe]/[NiFeSe] hydrogenase small subunit family. In terms of assembly, heterodimer of a large and a small subunit. The cofactor is [4Fe-4S] cluster. [3Fe-4S] cluster serves as cofactor.

It is found in the cell membrane. It catalyses the reaction H2 + A = AH2. This enzyme recycles the H(2) produced by nitrogenase to increase the production of ATP and to protect nitrogenase against inhibition or damage by O(2) under carbon- or phosphate-limited conditions. This is Uptake hydrogenase small subunit (hupA) from Rhodobacter capsulatus (Rhodopseudomonas capsulata).